The chain runs to 451 residues: CCAAT/enhancer-binding protein (451 aa).

3 disordered regions span residues 210 to 236 (TYNN…EPID), 267 to 298 (QSNN…NSTN), and 328 to 389 (LKHH…AKVR). 3 stretches are compositionally biased toward low complexity: residues 218-228 (ENSSVGSDSSS), 268-298 (SNNL…NSTN), and 334-350 (LQQT…QHAQ). Over residues 359 to 370 (KHVDKGTEEYRR) the composition is skewed to basic and acidic residues. Residues 365 to 428 (TEEYRRRRER…SLHKQIYMQL (64 aa)) form the bZIP domain. Residues 369–398 (RRRRERNNIAVRKSREKAKVRSKEVEERVK) form a basic motif region. Positions 400-407 (LLKEKDAL) are leucine-zipper.

Belongs to the bZIP family. C/EBP subfamily. As to quaternary structure, binds DNA as a dimer and can form stable heterodimers.

The protein localises to the nucleus. Its function is as follows. May be required for the expression of gene products mediating border cell migration. Among the DNA sequences that this protein binds with high affinity is a conserved site within the promoter of its gene. The sequence is that of CCAAT/enhancer-binding protein (slbo) from Drosophila virilis (Fruit fly).